A 503-amino-acid chain; its full sequence is Beta-amylase Tri a 17 (503 aa).

The substrate site is built by aspartate 51, histidine 91, and aspartate 99. Residue glutamate 184 is the Proton donor of the active site. Substrate-binding residues include lysine 293, histidine 298, and threonine 340. Residue glutamate 378 is the Proton acceptor of the active site. Residues 379 to 380 (NA) and arginine 418 each bind substrate.

The protein belongs to the glycosyl hydrolase 14 family.

It catalyses the reaction Hydrolysis of (1-&gt;4)-alpha-D-glucosidic linkages in polysaccharides so as to remove successive maltose units from the non-reducing ends of the chains.. The sequence is that of Beta-amylase Tri a 17 (BMY1) from Triticum aestivum (Wheat).